Reading from the N-terminus, the 329-residue chain is (12E)-labda-8(17),12,14-triene synthase (329 aa).

Residues Asp90 and Glu95 each contribute to the Mg(2+) site. The short motif at 90–95 is the DDXXXE motif element; the sequence is DDMHGE. Arg184 provides a ligand contact to substrate. Asn230 and Ser234 together coordinate Mg(2+). The NXXXSXXXE motif signature appears at 230 to 238; that stretch reads NDLASYERE. Residue Arg237 participates in substrate binding. Glu238 serves as a coordination point for Mg(2+). 316 to 317 is a substrate binding site; the sequence is RY.

It belongs to the terpene synthase family. Mg(2+) is required as a cofactor.

It carries out the reaction (+)-copalyl diphosphate = (12E)-labda-8(17),12,14-triene + diphosphate. Functionally, involved in the biosynthesis of the mercapturic acid derivative diterpene cyslabdan A, a potentiator of the beta-lactam antibiotic imipenem. Catalyzes the conversion of (+)-copalyl diphosphate to yield labda-8(17),12(E),14-triene (biformene). The protein is (12E)-labda-8(17),12,14-triene synthase of Streptomyces cyslabdanicus.